Consider the following 263-residue polypeptide: 3-deoxy-manno-octulosonate cytidylyltransferase (263 aa).

Belongs to the KdsB family.

It is found in the cytoplasm. The catalysed reaction is 3-deoxy-alpha-D-manno-oct-2-ulosonate + CTP = CMP-3-deoxy-beta-D-manno-octulosonate + diphosphate. The protein operates within nucleotide-sugar biosynthesis; CMP-3-deoxy-D-manno-octulosonate biosynthesis; CMP-3-deoxy-D-manno-octulosonate from 3-deoxy-D-manno-octulosonate and CTP: step 1/1. It participates in bacterial outer membrane biogenesis; lipopolysaccharide biosynthesis. Activates KDO (a required 8-carbon sugar) for incorporation into bacterial lipopolysaccharide in Gram-negative bacteria. This Burkholderia thailandensis (strain ATCC 700388 / DSM 13276 / CCUG 48851 / CIP 106301 / E264) protein is 3-deoxy-manno-octulosonate cytidylyltransferase.